We begin with the raw amino-acid sequence, 305 residues long: Glycine--tRNA ligase alpha subunit (305 aa).

Belongs to the class-II aminoacyl-tRNA synthetase family. In terms of assembly, tetramer of two alpha and two beta subunits.

The protein localises to the cytoplasm. The catalysed reaction is tRNA(Gly) + glycine + ATP = glycyl-tRNA(Gly) + AMP + diphosphate. This Vibrio vulnificus (strain CMCP6) protein is Glycine--tRNA ligase alpha subunit.